The sequence spans 255 residues: MDSCRMTTEVILHYRPYENDPKQLAKIAENVIQDFPTHPLPRFIPWFPYDESKLPLKPERLPPVISEEAAESVKQYLAISEPGVKSQSYDCTVDLLEFQPSSKLQHFIQSHTVKEQTNAAHLDKNSGKEKQHKQRSWSVSLASSHCPEKIFPLSRKLQASLRTLHLHSFHRARWTLEYSVCNNQTLEDIWTKLNRLIRRDELPSCNATIQRQLGQIWVFCDIKCCEYVGNLLKERLSLIGKIDLFVHKYGVIFSM.

Positions 33 to 88 (QDFPTHPLPRFIPWFPYDESKLPLKPERLPPVISEEAAESVKQYLAISEPGVKSQS) are sufficient for interaction with MAD2L2. The tract at residues 116–135 (QTNAAHLDKNSGKEKQHKQR) is disordered.

Component of the shieldin complex, consisting of SHLD1, SHLD2, SHLD3 and MAD2L2/REV7. Within the complex, SHLD2 forms a scaffold which interacts with a SHLD3-MAD2L2 subcomplex via its N-terminus, and with SHLD1 via its C-terminus. Interacts with ASTE1.

The protein resides in the chromosome. Its function is as follows. Component of the shieldin complex, which plays an important role in repair of DNA double-stranded breaks (DSBs). During G1 and S phase of the cell cycle, the complex functions downstream of TP53BP1 to promote non-homologous end joining (NHEJ) and suppress DNA end resection. Mediates various NHEJ-dependent processes including immunoglobulin class-switch recombination, and fusion of unprotected telomeres. This is Shieldin complex subunit 3 from Mus musculus (Mouse).